The following is a 116-amino-acid chain: HTH-type transcriptional regulator AnsR (116 aa).

One can recognise an HTH cro/C1-type domain in the interval 6-60; that stretch reads LTELRKKKNWSLQYTADLLGIAKSTYAGYESGYRRPSLEALAMLADLFDTTCDEL. Positions 17-36 form a DNA-binding region, H-T-H motif; the sequence is LQYTADLLGIAKSTYAGYES.

Transcriptional repressor for the ans operon coding for L-asparaginase and L-aspartase. NH4(+) may influence this repression. In Bacillus subtilis (strain 168), this protein is HTH-type transcriptional regulator AnsR (ansR).